A 275-amino-acid polypeptide reads, in one-letter code: Diaminopimelate epimerase (275 aa).

3 residues coordinate substrate: Asn-12, Gln-45, and Asn-65. Cys-74 (proton donor) is an active-site residue. Substrate-binding positions include 75 to 76, Asn-158, Asn-191, and 209 to 210; these read GN and ER. Cys-218 acts as the Proton acceptor in catalysis. A substrate-binding site is contributed by 219–220; that stretch reads GS.

Belongs to the diaminopimelate epimerase family. Homodimer.

Its subcellular location is the cytoplasm. It catalyses the reaction (2S,6S)-2,6-diaminopimelate = meso-2,6-diaminopimelate. The protein operates within amino-acid biosynthesis; L-lysine biosynthesis via DAP pathway; DL-2,6-diaminopimelate from LL-2,6-diaminopimelate: step 1/1. Catalyzes the stereoinversion of LL-2,6-diaminopimelate (L,L-DAP) to meso-diaminopimelate (meso-DAP), a precursor of L-lysine and an essential component of the bacterial peptidoglycan. In Shewanella amazonensis (strain ATCC BAA-1098 / SB2B), this protein is Diaminopimelate epimerase.